Here is a 226-residue protein sequence, read N- to C-terminus: RNA annealing protein YRA1 (226 aa).

The segment at 1 to 62 (MSANLDKSLD…PIRKNTRAPP (62 aa)) is disordered. At Ser-2 the chain carries N-acetylserine. Phosphoserine occurs at positions 8 and 100. The 81-residue stretch at 78–158 (VKVNVEGLPR…SRLRLNLIVD (81 aa)) folds into the RRM domain. The tract at residues 173–226 (AMPQKGGNAPRPVKRGPNRKAAMAKSQNKPKREKPAKKSLEDLDKEMADYFEKK) is disordered. Residues 208 to 226 (AKKSLEDLDKEMADYFEKK) are compositionally biased toward basic and acidic residues.

As to quaternary structure, component of the transcription/export (TREX) complex, which is at least is formed of SUB2, TEX1 and YRA1 and the THO complex composed of HPR1, MFT1, THO2 and THP1. Interacts with RDS3 and YRA2.

It localises to the nucleus. Functionally, RNA-binding RNA annealing protein. May have a role in pre-mRNA metabolism. Component the TREX complex, which operates in coupling transcription elongation to mRNA export. The chain is RNA annealing protein YRA1 (YRA1) from Saccharomyces cerevisiae (strain ATCC 204508 / S288c) (Baker's yeast).